A 790-amino-acid polypeptide reads, in one-letter code: Protein SEY1 (790 aa).

The Cytoplasmic segment spans residues 1 to 692; the sequence is MELSEGELSH…KRSIVQHITQ (692 aa). Residues 55 to 284 enclose the GB1/RHD3-type G domain; it reads GNNYHIISVF…VSNELFKPEY (230 aa). 65–72 is a binding site for GTP; sequence GSQSTGKS. The chain crosses the membrane as a helical span at residues 693 to 713; that stretch reads IPYYIYLIILVLGWNEFMAII. Residues 714 to 716 are Lumenal-facing; the sequence is RNP. A helical transmembrane segment spans residues 717-737; sequence LFFSLSIVLGATVYVLYYLGL. Over 738-790 the chain is Cytoplasmic; the sequence is LRPALVVAQRTMDEVIVMAKTKLREVLIDDHEVTGRQLNKMAGSKENIELDDM.

The protein belongs to the TRAFAC class dynamin-like GTPase superfamily. GB1/RHD3 GTPase family. RHD3 subfamily.

It is found in the endoplasmic reticulum membrane. In terms of biological role, cooperates with the reticulon proteins and tubule-shaping DP1 family proteins to generate and maintain the structure of the tubular endoplasmic reticulum network. Has GTPase activity, which is required for its function in ER organization. The protein is Protein SEY1 of Candida albicans (strain WO-1) (Yeast).